A 914-amino-acid polypeptide reads, in one-letter code: Scaffold attachment factor B1 (914 aa).

The span at 1 to 24 (MAETLSGLGDSGAAGAAALSSASS) shows a compositional bias: low complexity. Positions 1–33 (MAETLSGLGDSGAAGAAALSSASSETGTRRLSD) are disordered. Ala2 carries the N-acetylalanine modification. Phosphoserine occurs at positions 24 and 55. One can recognise an SAP domain in the interval 31–65 (LSDLRVIDLRAELRKRNVDSSGNKSVLMERLKKAI). The disordered stretch occupies residues 64 to 117 (AIEDEGGNPDEIEITSEGNKKTSKRSSKGRKPEEEGVEDNGLEENSGDGQEDVE). Residues 67–77 (DEGGNPDEIEI) show a composition bias toward acidic residues. Ser79 bears the Phosphoserine mark. The segment covering 98–117 (EGVEDNGLEENSGDGQEDVE) has biased composition (acidic residues). Glycyl lysine isopeptide (Lys-Gly) (interchain with G-Cter in SUMO2) cross-links involve residues Lys172 and Lys186. Thr188 bears the Phosphothreonine mark. 3 positions are modified to phosphoserine: Ser195, Ser197, and Ser209. A disordered region spans residues 221–407 (LGETCKSEPV…EKGRSSCGRN (187 aa)). Basic and acidic residues predominate over residues 225-234 (CKSEPVKEES). A Glycyl lysine isopeptide (Lys-Gly) (interchain with G-Cter in SUMO) cross-link involves residue Lys231. Positions 275–286 (SESTAHAQSSKA) are enriched in polar residues. The span at 293-309 (VKREPAEQPGDGERTDC) shows a compositional bias: basic and acidic residues. Lys294 is covalently cross-linked (Glycyl lysine isopeptide (Lys-Gly) (interchain with G-Cter in SUMO)). Residues 319–330 (EQSSAASELAEA) are compositionally biased toward low complexity. The segment covering 346-359 (EARDSKEDGRKFDF) has biased composition (basic and acidic residues). Polar residues predominate over residues 371–383 (ESSTSEGADQKMS). Lys381 participates in a covalent cross-link: Glycyl lysine isopeptide (Lys-Gly) (interchain with G-Cter in SUMO2). Ser383 and Ser384 each carry phosphoserine. Basic and acidic residues predominate over residues 390–401 (DTKRLSKEEKGR). Residue Lys392 forms a Glycyl lysine isopeptide (Lys-Gly) (interchain with G-Cter in SUMO2) linkage. In terms of domain architecture, RRM spans 406–484 (RNFWVSGLSS…KMISVEKAKN (79 aa)). Ser415 is subject to Phosphoserine. 2 stretches are compositionally biased toward basic and acidic residues: residues 477–551 (ISVE…ERSR) and 559–570 (GTERTVVMDKSK). 3 disordered regions span residues 477 to 636 (ISVE…QAQW), 670 to 706 (RERM…QERR), and 748 to 914 (FDHR…TRRY). Residues Lys483, Lys514, Lys543, and Lys570 each participate in a glycyl lysine isopeptide (Lys-Gly) (interchain with G-Cter in SUMO2) cross-link. The segment at 528–791 (GDDGSGEKSK…RHGGPERHGR (264 aa)) is interaction with POLR2A; SFRS1; SFRS9 and SFRS10. Residue Lys578 forms a Glycyl lysine isopeptide (Lys-Gly) (interchain with G-Cter in SUMO1); alternate linkage. Residue Lys578 forms a Glycyl lysine isopeptide (Lys-Gly) (interchain with G-Cter in SUMO2); alternate linkage. Phosphoserine occurs at positions 580, 582, 601, and 604. The segment covering 581–636 (GSKERASKSLDRKSASREKRSVVSFDKVKEPRKSRDSESHRVRERSEREQRMQAQW) has biased composition (basic and acidic residues). The Nuclear localization signal signature appears at 599–616 (KRSVVSFDKVKEPRKSRD). The interval 599–914 (KRSVVSFDKV…PSDARFTRRY (316 aa)) is interaction with SAFB2. N6-acetyllysine is present on Lys607. Residues 748-795 (FDHRDRGRYPDHSVDRREGSRSMMGEREGQHYPERHGGPERHGRDSRD) show a composition bias toward basic and acidic residues. Arg810 carries the omega-N-methylarginine modification. Composition is skewed to basic and acidic residues over residues 816 to 831 (PRRD…DDRA) and 840 to 850 (MMDRDHKRWQG). Lys846 is covalently cross-linked (Glycyl lysine isopeptide (Lys-Gly) (interchain with G-Cter in SUMO2)). Asymmetric dimethylarginine is present on residues Arg867, Arg873, and Arg883. The segment covering 891–900 (GMQGGFGGQS) has biased composition (gly residues). Residues 904 to 914 (RPSDARFTRRY) show a composition bias toward basic and acidic residues.

Monomer and homodimer. Interacts with KHDRBS3. Interacts with CLK2. Interacts with POLR2A, ASF/SRSF1, SRp30c/SRFS9 and TRA2B/SFRS10. Interacts with SRPK1 and inhibits its activity. Interacts with RBMX. Interacts with FUS. Interacts with ZBED4. Sumoylated by PIAS1 with SUMO1 and SUMO2/3, desumoylated by SENP1. Sumoylation is required for transcriptional repressor activity.

Its subcellular location is the nucleus. Its function is as follows. Binds to scaffold/matrix attachment region (S/MAR) DNA and forms a molecular assembly point to allow the formation of a 'transcriptosomal' complex (consisting of SR proteins and RNA polymerase II) coupling transcription and RNA processing. Functions as an estrogen receptor corepressor and can also bind to the HSP27 promoter and decrease its transcription. Thereby acts as a negative regulator of cell proliferation. When associated with RBMX, binds to and stimulates transcription from the SREBF1 promoter. This is Scaffold attachment factor B1 (SAFB) from Pongo abelii (Sumatran orangutan).